The primary structure comprises 472 residues: Serine/threonine-protein kinase ULK3 (472 aa).

In terms of domain architecture, Protein kinase spans 14 to 270 (FILTERLGSG…FKDFFAHPWV (257 aa)). ATP contacts are provided by residues 20-28 (LGSGTYATV) and Lys-44. The active-site Proton acceptor is the Asp-137. Ser-176 bears the Phosphoserine mark. Positions 280–348 (SLAQARALVV…SRAEELKAIV (69 aa)) constitute an MIT 1 domain. Residues Ser-350, Ser-384, and Ser-464 each carry the phosphoserine; by autocatalysis modification. An MIT 2 domain is found at 375-444 (RLLAALEVAS…ARAEYLKEQI (70 aa)).

The protein belongs to the protein kinase superfamily. Ser/Thr protein kinase family. APG1/unc-51/ULK1 subfamily. As to quaternary structure, interacts (via protein kinase domain) with SUFU. Autophosphorylated. Autophosphorylation is blocked by interaction with SUFU.

The protein localises to the cytoplasm. It carries out the reaction L-seryl-[protein] + ATP = O-phospho-L-seryl-[protein] + ADP + H(+). It catalyses the reaction L-threonyl-[protein] + ATP = O-phospho-L-threonyl-[protein] + ADP + H(+). Its function is as follows. Serine/threonine protein kinase that acts as a regulator of Sonic hedgehog (SHH) signaling and autophagy. Acts as a negative regulator of SHH signaling in the absence of SHH ligand: interacts with SUFU, thereby inactivating the protein kinase activity and preventing phosphorylation of GLI proteins (GLI1, GLI2 and/or GLI3). Positively regulates SHH signaling in the presence of SHH: dissociates from SUFU, autophosphorylates and mediates phosphorylation of GLI2, activating it and promoting its nuclear translocation. Phosphorylates in vitro GLI2, as well as GLI1 and GLI3, although less efficiently. Also acts as a regulator of autophagy: following cellular senescence, able to induce autophagy. The sequence is that of Serine/threonine-protein kinase ULK3 (Ulk3) from Mus musculus (Mouse).